A 569-amino-acid chain; its full sequence is Urease subunit alpha (569 aa).

Histidine 136, histidine 138, and lysine 219 together coordinate Ni(2+). At lysine 219 the chain carries N6-carboxylysine. Histidine 221 contributes to the substrate binding site. Positions 248 and 274 each coordinate Ni(2+). Histidine 322 serves as the catalytic Proton donor. Aspartate 362 is a binding site for Ni(2+).

The protein belongs to the metallo-dependent hydrolases superfamily. Urease alpha subunit family. In terms of assembly, heterotrimer of UreA (gamma), UreB (beta) and UreC (alpha) subunits. Three heterotrimers associate to form the active enzyme. Requires Ni cation as cofactor. Post-translationally, carboxylation allows a single lysine to coordinate two nickel ions.

Its subcellular location is the cytoplasm. The enzyme catalyses urea + 2 H2O + H(+) = hydrogencarbonate + 2 NH4(+). It participates in nitrogen metabolism; urea degradation; CO(2) and NH(3) from urea (urease route): step 1/1. The chain is Urease subunit alpha from Dinoroseobacter shibae (strain DSM 16493 / NCIMB 14021 / DFL 12).